The chain runs to 279 residues: Oxygen-dependent coproporphyrinogen-III oxidase (279 aa).

Residue S102 coordinates substrate. A divalent metal cation is bound by residues H106 and H116. The active-site Proton donor is H116. 118 to 120 (NTR) contacts substrate. Residues H149 and H179 each coordinate a divalent metal cation. Residues 244–279 (YVEFNLLYDRGTKFGLMTDGNVEAILMSLPPEVKWA) form an important for dimerization region.

It belongs to the aerobic coproporphyrinogen-III oxidase family. In terms of assembly, homodimer. It depends on a divalent metal cation as a cofactor.

It is found in the cytoplasm. It carries out the reaction coproporphyrinogen III + O2 + 2 H(+) = protoporphyrinogen IX + 2 CO2 + 2 H2O. It functions in the pathway porphyrin-containing compound metabolism; protoporphyrin-IX biosynthesis; protoporphyrinogen-IX from coproporphyrinogen-III (O2 route): step 1/1. Its function is as follows. Involved in the heme biosynthesis. Catalyzes the aerobic oxidative decarboxylation of propionate groups of rings A and B of coproporphyrinogen-III to yield the vinyl groups in protoporphyrinogen-IX. The chain is Oxygen-dependent coproporphyrinogen-III oxidase from Rickettsia bellii (strain OSU 85-389).